The primary structure comprises 368 residues: Zinc finger protein 24 (368 aa).

Lys22 is covalently cross-linked (Glycyl lysine isopeptide (Lys-Gly) (interchain with G-Cter in SUMO2)). A Glycyl lysine isopeptide (Lys-Gly) (interchain with G-Cter in SUMO1); alternate cross-link involves residue Lys27. Residue Lys27 forms a Glycyl lysine isopeptide (Lys-Gly) (interchain with G-Cter in SUMO2); alternate linkage. The SCAN box domain maps to 52–134 (RQRFRQFGYQ…TVLEDLESEL (83 aa)). A phosphoserine mark is found at Ser132 and Ser142. Residues Lys147, Lys177, and Lys236 each participate in a glycyl lysine isopeptide (Lys-Gly) (interchain with G-Cter in SUMO2) cross-link. The segment at 251-273 (HICDECGKHFSQGSALILHQRIH) adopts a C2H2-type 1 zinc-finger fold. Residues 251 to 301 (HICDECGKHFSQGSALILHQRIHSGEKPYGCVECGKAFSRSSILVQHQRVH) form a necessary and sufficient for nuclear localization region. Ser274 is modified (phosphoserine). Residues Lys277 and Lys286 each participate in a glycyl lysine isopeptide (Lys-Gly) (interchain with G-Cter in SUMO2) cross-link. 3 consecutive C2H2-type zinc fingers follow at residues 279 to 301 (YGCV…QRVH), 307 to 329 (YKCL…QRIH), and 335 to 357 (YECV…XXXH). Ser292 is subject to Phosphoserine. The residue at position 335 (Tyr335) is a Phosphotyrosine. Glycyl lysine isopeptide (Lys-Gly) (interchain with G-Cter in SUMO2) cross-links involve residues Lys361 and Lys367.

It belongs to the krueppel C2H2-type zinc-finger protein family. In terms of processing, sumoylated.

It localises to the nucleus. In terms of biological role, transcription factor required for myelination of differentiated oligodendrocytes. Required for the conversion of oligodendrocytes from the premyelinating to the myelinating state. In the developing central nervous system (CNS), involved in the maintenance in the progenitor stage by promoting the cell cycle. Specifically binds to the 5'-TCAT-3' DNA sequence. Has transcription repressor activity in vitro. This Pan paniscus (Pygmy chimpanzee) protein is Zinc finger protein 24 (ZNF24).